The chain runs to 82 residues: Small ribosomal subunit protein bS16 (82 aa).

The protein belongs to the bacterial ribosomal protein bS16 family.

This Vibrio vulnificus (strain CMCP6) protein is Small ribosomal subunit protein bS16.